The chain runs to 104 residues: uncharacterized protein (104 aa).

Residues 80-98 traverse the membrane as a helical segment; it reads GSSLPLFDLVFILLSTFFL.

It localises to the membrane. This is an uncharacterized protein from Saccharomyces cerevisiae (strain ATCC 204508 / S288c) (Baker's yeast).